A 488-amino-acid polypeptide reads, in one-letter code: Glutamate--tRNA ligase (488 aa).

The 'HIGH' region motif lies at 11-21 (PSPTGQIHIGN). 4 residues coordinate Zn(2+): C108, C110, C135, and D137. A 'KMSKS' region motif is present at residues 252–256 (KLSKR). Residue K255 participates in ATP binding.

This sequence belongs to the class-I aminoacyl-tRNA synthetase family. Glutamate--tRNA ligase type 1 subfamily. In terms of assembly, monomer. Zn(2+) is required as a cofactor.

It localises to the cytoplasm. It carries out the reaction tRNA(Glu) + L-glutamate + ATP = L-glutamyl-tRNA(Glu) + AMP + diphosphate. In terms of biological role, catalyzes the attachment of glutamate to tRNA(Glu) in a two-step reaction: glutamate is first activated by ATP to form Glu-AMP and then transferred to the acceptor end of tRNA(Glu). The chain is Glutamate--tRNA ligase from Natranaerobius thermophilus (strain ATCC BAA-1301 / DSM 18059 / JW/NM-WN-LF).